A 270-amino-acid polypeptide reads, in one-letter code: Transcription factor PU.1 (270 aa).

Residues 124 to 162 are disordered; that stretch reads LSPAQPSSDEEEGERQSPPLEVSDGEADGLEPGPGLLHG. A phosphoserine mark is found at serine 140 and serine 146. Residues 153–162 show a composition bias toward low complexity; it reads LEPGPGLLHG. Positions 170 to 253 form a DNA-binding region, ETS; that stretch reads IRLYQFLLDL…VKKKLTYQFS (84 aa). 4 residues coordinate DNA: lysine 217, arginine 230, arginine 233, and lysine 243.

This sequence belongs to the ETS family. Binds DNA as a monomer. Can form homomers. Directly interacts with CEBPD/NF-IL6-beta; this interaction does not affect DNA-binding properties of each partner. Interacts with NONO/p54(nrb). Interacts with RUNX1/AML1. Interacts with GFI1; the interaction represses SPI1 transcriptional activity, hence blocks SPI1-induced macrophage differentiation of myeloid progenitor cells. Interacts with CEBPE. Interacts with IRF4/Pip and IRF8. Interacts with JUN. Interacts with RB1. Interacts with TBP.

It is found in the nucleus. Transcriptional activity at macrophage-specific genes is inhibited by interaction with GFI1, which results in the inhibition of SPI1-induced macrophage differentiation of myeloid progenitor cells, but not that of the granulocyte lineage. In terms of biological role, pioneer transcription factor, which controls hematopoietic cell fate by decompacting stem cell heterochromatin and allowing other transcription factors to enter otherwise inaccessible genomic sites. Once in open chromatin, can directly control gene expression by binding genetic regulatory elements and can also more broadly influence transcription by recruiting transcription factors, such as interferon regulatory factors (IRFs), to otherwise inaccessible genomic regions. Transcriptionally activates genes important for myeloid and lymphoid lineages, such as CSF1R. Transcriptional activation from certain promoters, possibly containing low affinity binding sites, is achieved cooperatively with other transcription factors. FCER1A transactivation is achieved in cooperation with GATA1. May be particularly important for the pro- to pre-B cell transition. Binds (via the ETS domain) onto the purine-rich DNA core sequence 5'-GAGGAA-3', also known as the PU-box. In vitro can bind RNA and interfere with pre-mRNA splicing. In Sus scrofa (Pig), this protein is Transcription factor PU.1 (SPI1).